Here is a 138-residue protein sequence, read N- to C-terminus: 6,7-dimethyl-8-ribityllumazine synthase (138 aa).

Residues Phe13, 45-47 (VFD), and 69-71 (AVI) each bind 5-amino-6-(D-ribitylamino)uracil. 74–75 (AT) provides a ligand contact to (2S)-2-hydroxy-3-oxobutyl phosphate. His77 functions as the Proton donor in the catalytic mechanism. Residue Leu102 participates in 5-amino-6-(D-ribitylamino)uracil binding. A (2S)-2-hydroxy-3-oxobutyl phosphate-binding site is contributed by Arg117.

It belongs to the DMRL synthase family.

The enzyme catalyses (2S)-2-hydroxy-3-oxobutyl phosphate + 5-amino-6-(D-ribitylamino)uracil = 6,7-dimethyl-8-(1-D-ribityl)lumazine + phosphate + 2 H2O + H(+). The protein operates within cofactor biosynthesis; riboflavin biosynthesis; riboflavin from 2-hydroxy-3-oxobutyl phosphate and 5-amino-6-(D-ribitylamino)uracil: step 1/2. Catalyzes the formation of 6,7-dimethyl-8-ribityllumazine by condensation of 5-amino-6-(D-ribitylamino)uracil with 3,4-dihydroxy-2-butanone 4-phosphate. This is the penultimate step in the biosynthesis of riboflavin. In Methanobrevibacter smithii (strain ATCC 35061 / DSM 861 / OCM 144 / PS), this protein is 6,7-dimethyl-8-ribityllumazine synthase.